The sequence spans 274 residues: Putative ABC transporter ATP-binding protein alr3946 (274 aa).

The region spanning 6–242 (LTFEQVYYTY…REILDSIELG (237 aa)) is the ABC transporter domain. Residue 40–47 (GRNGCGKT) participates in ATP binding.

The protein belongs to the ABC transporter superfamily.

It localises to the cell inner membrane. In terms of biological role, probably part of an ABC transporter complex. Responsible for energy coupling to the transport system. The protein is Putative ABC transporter ATP-binding protein alr3946 of Nostoc sp. (strain PCC 7120 / SAG 25.82 / UTEX 2576).